Consider the following 225-residue polypeptide: MSNLKHCSNCKHNGLITESNHEFCIFCQSIFQLSNKVSKKSNFHVSNKLIHLRNVLRRLLSNQCSSDVIVELKSVMTKNNISSTDIDANFVSSFLKANEKINKKDYKLVFEIINHIKEEKLNLDTSKINEVIEIFKHLVFFCQENTPSKTINYSFFLDKIFSLTSVTNNLKPQTVKNYTKNNSNQLVWENFLDYMKKKKINTSVYDYGHEYVFVDYGFTTCSLEV.

A zinc finger spans residues 7-27; that stretch reads CSNCKHNGLITESNHEFCIFC.

It belongs to the nucleo-cytoplasmic large DNA viruses (NCLDVs) VLTF-3 family. In terms of assembly, interacts with the late transcription elongation factor H5/VLTF-4. Interacts with the late transcription factors VLTF-1.

Functionally, acts with RNA polymerase to initiate transcription from late gene promoters. The protein is Viral late gene transcription factor 3 (VLTF3) of Fowlpox virus (strain NVSL) (FPV).